A 1037-amino-acid polypeptide reads, in one-letter code: Multidrug resistance protein MdtF (1037 aa).

The Cytoplasmic segment spans residues 1 to 9 (MANYFIDRP). The helical transmembrane segment at 10–30 (VFAWVLAIIMMLAGGLAIMNL) threads the bilayer. The Periplasmic portion of the chain corresponds to 31 to 338 (PVAQYPQIAP…TTPFIEISIQ (308 aa)). A helical membrane pass occupies residues 339-359 (EVFKTLVEAIILVFLVMYLFL). Topologically, residues 360–369 (QNFRATIIPT) are cytoplasmic. The chain crosses the membrane as a helical span at residues 370–390 (IAVPVVILGTFAILSAVGFTI). Topologically, residues 391–392 (NT) are periplasmic. A helical membrane pass occupies residues 393-413 (LTMFGMVLAIGLLVDDAIVVV). At 414 to 441 (ENVERVIAEDKLPPKEATHKSMGQIQRA) the chain is on the cytoplasmic side. Residues 442–462 (LVGIAVVLSAVFMPMAFMSGA) form a helical membrane-spanning segment. The Periplasmic segment spans residues 463–471 (TGEIYRQFS). Residues 472–492 (ITLISSMLLSVFVAMSLTPAL) form a helical membrane-spanning segment. At 493-534 (CATILKAAPEGGHKPNALFARFNTLFEKSTQHYTDSTRSLLR) the chain is on the cytoplasmic side. The helical transmembrane segment at 535–555 (CTGRYMVIYLLICAGMAVLFL) threads the bilayer. At 556-870 (RTPTSFLPEE…SYQEALSSNQ (315 aa)) the chain is on the periplasmic side. The chain crosses the membrane as a helical span at residues 871 to 891 (APALYAISLVVVFLALAALYE). A topological domain (cytoplasmic) is located at residue Ser-892. Residues 893 to 913 (WSIPFSVMLVVPLGVVGALLA) traverse the membrane as a helical segment. Residues 914-927 (TDLRGLSNDVYFQV) are Periplasmic-facing. A helical membrane pass occupies residues 928–948 (GLLTTIGLSAKNAILIVEFAV). The Cytoplasmic segment spans residues 949-972 (EMMQKEGKTPIEAIIEAARMRLRP). A helical transmembrane segment spans residues 973–993 (ILMTSLAFILGVLPLVISHGA). Residues 994–1006 (GSGAQNAVGTGVM) lie on the Periplasmic side of the membrane. Residues 1007–1027 (GGMFAATVLAIYFVPVFFVVV) traverse the membrane as a helical segment. Over 1028 to 1037 (EHLFARFKKA) the chain is Cytoplasmic.

It belongs to the resistance-nodulation-cell division (RND) (TC 2.A.6) family. Homotrimer. Part of the tripartite efflux system MdtEF-TolC, which is composed of an inner membrane transporter, MdtF, a membrane fusion protein, MdtE, and an outer membrane component, TolC. The complex forms a large protein conduit and can translocate molecules across both the inner and outer membranes.

The protein resides in the cell inner membrane. Part of the tripartite efflux system MdtEF-TolC, which confers resistance to various compounds. In Escherichia coli O157:H7, this protein is Multidrug resistance protein MdtF (mdtF).